An 83-amino-acid polypeptide reads, in one-letter code: MSSGGLLLLLGLLTLLEILTPVSSKDRPKFCELPADSGSCKGNFQAFYYNPDQHQCLEFIYGGCDGNANNFKTIDECKRTCAA.

Residues 1–24 (MSSGGLLLLLGLLTLLEILTPVSS) form the signal peptide. The region spanning 31 to 81 (CELPADSGSCKGNFQAFYYNPDQHQCLEFIYGGCDGNANNFKTIDECKRTC) is the BPTI/Kunitz inhibitor domain. Intrachain disulfides connect C31–C81, C40–C64, and C56–C77.

The protein belongs to the venom Kunitz-type family. In terms of tissue distribution, expressed by the venom gland.

The protein localises to the secreted. Its function is as follows. Serine protease inhibitor. The chain is Kunitz-type serine protease inhibitor stephenin-2 from Hoplocephalus stephensii (Stephens's banded snake).